The following is a 189-amino-acid chain: Hypoxanthine/guanine phosphoribosyltransferase (189 aa).

The protein belongs to the purine/pyrimidine phosphoribosyltransferase family. Archaeal HPRT subfamily. In terms of assembly, homodimer.

The protein localises to the cytoplasm. It catalyses the reaction IMP + diphosphate = hypoxanthine + 5-phospho-alpha-D-ribose 1-diphosphate. It carries out the reaction GMP + diphosphate = guanine + 5-phospho-alpha-D-ribose 1-diphosphate. It participates in purine metabolism; IMP biosynthesis via salvage pathway; IMP from hypoxanthine: step 1/1. In terms of biological role, catalyzes a salvage reaction resulting in the formation of IMP that is energically less costly than de novo synthesis. This is Hypoxanthine/guanine phosphoribosyltransferase from Methanothermus fervidus (strain ATCC 43054 / DSM 2088 / JCM 10308 / V24 S).